Here is a 307-residue protein sequence, read N- to C-terminus: Small ribosomal subunit biogenesis GTPase RsgA (307 aa).

A disordered region spans residues 1-21 (MPSEHPFSDGISTPNPKETMN). Residues 10-21 (GISTPNPKETMN) are compositionally biased toward polar residues. In terms of domain architecture, CP-type G spans 85 to 242 (RQDAWKTKLI…LIDSPGLQEF (158 aa)). GTP contacts are provided by residues 135 to 138 (NKAD) and 184 to 192 (GQSGMGKST). Zn(2+) contacts are provided by Cys-266, Cys-271, His-273, and Cys-279.

The protein belongs to the TRAFAC class YlqF/YawG GTPase family. RsgA subfamily. As to quaternary structure, monomer. Associates with 30S ribosomal subunit, binds 16S rRNA. It depends on Zn(2+) as a cofactor.

It localises to the cytoplasm. Functionally, one of several proteins that assist in the late maturation steps of the functional core of the 30S ribosomal subunit. Helps release RbfA from mature subunits. May play a role in the assembly of ribosomal proteins into the subunit. Circularly permuted GTPase that catalyzes slow GTP hydrolysis, GTPase activity is stimulated by the 30S ribosomal subunit. This is Small ribosomal subunit biogenesis GTPase RsgA from Neisseria gonorrhoeae (strain NCCP11945).